A 407-amino-acid polypeptide reads, in one-letter code: Arylacetamide deacetylase-like 4 (407 aa).

Residues 1-4 lie on the Cytoplasmic side of the membrane; sequence MAVP. Residues 5–25 form a helical; Signal-anchor for type II membrane protein membrane-spanning segment; it reads WLVLLLALPIFFLGVFVWAVF. Over 26–407 the chain is Lumenal; it reads EHFLTTDIPA…NAVVSYIKGI (382 aa). The Involved in the stabilization of the negatively charged intermediate by the formation of the oxyanion hole signature appears at 119–121; the sequence is HGG. An N-linked (GlcNAc...) asparagine glycan is attached at Asn-168. The active site involves Ser-193. Residue Asn-269 is glycosylated (N-linked (GlcNAc...) asparagine). Residues Asp-347 and His-377 contribute to the active site.

The protein belongs to the 'GDXG' lipolytic enzyme family.

Its subcellular location is the membrane. The sequence is that of Arylacetamide deacetylase-like 4 (AADACL4) from Homo sapiens (Human).